We begin with the raw amino-acid sequence, 900 residues long: Bifunctional uridylyltransferase/uridylyl-removing enzyme (900 aa).

A uridylyltransferase region spans residues 1–342; sequence MPQVDPELFD…PCEQPVQIQP (342 aa). The interval 343–705 is uridylyl-removing; sequence LNSRFQLRDG…TTQREFESGS (363 aa). In terms of domain architecture, HD spans 461–583; sequence VDAHTLNLIK…VGDQTHLDYL (123 aa). ACT domains follow at residues 706–789 and 816–891; these read QIFI…IIQR and VLEV…DNGR.

It belongs to the GlnD family. Mg(2+) serves as cofactor.

It carries out the reaction [protein-PII]-L-tyrosine + UTP = [protein-PII]-uridylyl-L-tyrosine + diphosphate. The enzyme catalyses [protein-PII]-uridylyl-L-tyrosine + H2O = [protein-PII]-L-tyrosine + UMP + H(+). With respect to regulation, uridylyltransferase (UTase) activity is inhibited by glutamine, while glutamine activates uridylyl-removing (UR) activity. Functionally, modifies, by uridylylation and deuridylylation, the PII regulatory proteins (GlnB and homologs), in response to the nitrogen status of the cell that GlnD senses through the glutamine level. Under low glutamine levels, catalyzes the conversion of the PII proteins and UTP to PII-UMP and PPi, while under higher glutamine levels, GlnD hydrolyzes PII-UMP to PII and UMP (deuridylylation). Thus, controls uridylylation state and activity of the PII proteins, and plays an important role in the regulation of nitrogen assimilation and metabolism. This is Bifunctional uridylyltransferase/uridylyl-removing enzyme from Pseudomonas aeruginosa (strain UCBPP-PA14).